The chain runs to 147 residues: 3-dehydroquinate dehydratase (147 aa).

Tyrosine 23 serves as the catalytic Proton acceptor. Substrate contacts are provided by asparagine 74, histidine 80, and aspartate 87. Residue histidine 100 is the Proton donor of the active site. Substrate is bound by residues 101 to 102 and arginine 111; that span reads IS.

The protein belongs to the type-II 3-dehydroquinase family. Homododecamer.

The enzyme catalyses 3-dehydroquinate = 3-dehydroshikimate + H2O. It functions in the pathway metabolic intermediate biosynthesis; chorismate biosynthesis; chorismate from D-erythrose 4-phosphate and phosphoenolpyruvate: step 3/7. Catalyzes a trans-dehydration via an enolate intermediate. This Bacillus pumilus (strain SAFR-032) protein is 3-dehydroquinate dehydratase.